The following is a 454-amino-acid chain: tRNA modification GTPase MnmE (454 aa).

Residues Arg-26, Glu-84, and Lys-123 each coordinate (6S)-5-formyl-5,6,7,8-tetrahydrofolate. Positions 219–378 (GLQVVIAGKP…LVDAITAHAG (160 aa)) constitute a TrmE-type G domain. Position 229 (Asn-229) interacts with K(+). Residues 229-234 (NAGKSS), 248-254 (TDIAGTT), and 273-276 (DTAG) each bind GTP. Ser-233 serves as a coordination point for Mg(2+). K(+)-binding residues include Thr-248, Ile-250, and Thr-253. Residue Thr-254 participates in Mg(2+) binding. Residue Lys-454 participates in (6S)-5-formyl-5,6,7,8-tetrahydrofolate binding.

Belongs to the TRAFAC class TrmE-Era-EngA-EngB-Septin-like GTPase superfamily. TrmE GTPase family. As to quaternary structure, homodimer. Heterotetramer of two MnmE and two MnmG subunits. K(+) is required as a cofactor.

It localises to the cytoplasm. Exhibits a very high intrinsic GTPase hydrolysis rate. Involved in the addition of a carboxymethylaminomethyl (cmnm) group at the wobble position (U34) of certain tRNAs, forming tRNA-cmnm(5)s(2)U34. This chain is tRNA modification GTPase MnmE, found in Acinetobacter baumannii (strain ATCC 17978 / DSM 105126 / CIP 53.77 / LMG 1025 / NCDC KC755 / 5377).